Reading from the N-terminus, the 522-residue chain is Cytochrome P450 714C2 (522 aa).

The Lumenal portion of the chain corresponds to Met-1 to Ala-11. A helical; Signal-anchor for type III membrane protein membrane pass occupies residues Leu-12 to Leu-32. At Arg-33 to Leu-522 the chain is on the cytoplasmic side. Cys-470 lines the heme pocket.

It belongs to the cytochrome P450 family. It depends on heme as a cofactor.

It is found in the membrane. Functionally, probably not involved in gibberellin metabolism since over-expression of CYP714C2 in a heterologous system does not induce semi-dwarfism. The chain is Cytochrome P450 714C2 (CYP714C2) from Oryza sativa subsp. japonica (Rice).